The following is a 348-amino-acid chain: Phosphoribosylformylglycinamidine cyclo-ligase (348 aa).

It belongs to the AIR synthase family.

Its subcellular location is the cytoplasm. The enzyme catalyses 2-formamido-N(1)-(5-O-phospho-beta-D-ribosyl)acetamidine + ATP = 5-amino-1-(5-phospho-beta-D-ribosyl)imidazole + ADP + phosphate + H(+). It functions in the pathway purine metabolism; IMP biosynthesis via de novo pathway; 5-amino-1-(5-phospho-D-ribosyl)imidazole from N(2)-formyl-N(1)-(5-phospho-D-ribosyl)glycinamide: step 2/2. In Ruegeria pomeroyi (strain ATCC 700808 / DSM 15171 / DSS-3) (Silicibacter pomeroyi), this protein is Phosphoribosylformylglycinamidine cyclo-ligase.